The chain runs to 185 residues: Ribosome-recycling factor (185 aa).

The protein belongs to the RRF family.

It localises to the cytoplasm. In terms of biological role, responsible for the release of ribosomes from messenger RNA at the termination of protein biosynthesis. May increase the efficiency of translation by recycling ribosomes from one round of translation to another. The sequence is that of Ribosome-recycling factor from Listeria monocytogenes serovar 1/2a (strain ATCC BAA-679 / EGD-e).